The primary structure comprises 136 residues: ATP synthase F(0) complex subunit C1, mitochondrial (136 aa).

A mitochondrion-targeting transit peptide spans 1–61; that stretch reads MQTTGALLIS…REFQTSVVSR (61 aa). A helical transmembrane segment spans residues 77–97; that stretch reads VGVAGSGAGIGTVFGSLIIGY. Lysine 104 carries the post-translational modification N6,N6,N6-trimethyllysine. The chain crosses the membrane as a helical span at residues 112 to 132; the sequence is ILGFALSEAMGLFCLMVAFLI.

The protein belongs to the ATPase C chain family. In terms of assembly, homooctamer; the c-ring consists of eight c subunits forming a circle, and each subunit adopts a hairpin shape. Component of the ATP synthase complex composed at least of ATP5F1A/subunit alpha, ATP5F1B/subunit beta, ATP5MC1/subunit c (homooctomer), MT-ATP6/subunit a, MT-ATP8/subunit 8, ATP5ME/subunit e, ATP5MF/subunit f, ATP5MG/subunit g, ATP5MK/subunit k, ATP5MJ/subunit j, ATP5F1C/subunit gamma, ATP5F1D/subunit delta, ATP5F1E/subunit epsilon, ATP5PF/subunit F6, ATP5PB/subunit b, ATP5PD/subunit d, ATP5PO/subunit OSCP. ATP synthase complex consists of a soluble F(1) head domain (subunits alpha(3) and beta(3)) - the catalytic core - and a membrane F(0) domain - the membrane proton channel (subunits c, a, 8, e, f, g, k and j). These two domains are linked by a central stalk (subunits gamma, delta, and epsilon) rotating inside the F1 region and a stationary peripheral stalk (subunits F6, b, d, and OSCP). Interacts with TMEM70 (homooligomer form); this interaction facilitates the oligomer formation of subunit c/ATP5MC1 (c-ring) and the c-ring membrane insertion and also protects ATP5MC1 against intramitochondrial proteolysis. Post-translationally, trimethylated by ATPSCKMT at Lys-104. Methylation is required for proper incorporation of the C subunit into the ATP synthase complex and mitochondrial respiration.

It is found in the mitochondrion membrane. The catalysed reaction is H(+)(in) = H(+)(out). In terms of biological role, subunit c, of the mitochondrial membrane ATP synthase complex (F(1)F(0) ATP synthase or Complex V) that produces ATP from ADP in the presence of a proton gradient across the membrane which is generated by electron transport complexes of the respiratory chain. ATP synthase complex consist of a soluble F(1) head domain - the catalytic core - and a membrane F(1) domain - the membrane proton channel. These two domains are linked by a central stalk rotating inside the F(1) region and a stationary peripheral stalk. During catalysis, ATP synthesis in the catalytic domain of F(1) is coupled via a rotary mechanism of the central stalk subunits to proton translocation. With the subunit a (MT-ATP6), forms the proton-conducting channel in the F(0) domain, that contains two crucial half-channels (inlet and outlet) that facilitate proton movement from the mitochondrial intermembrane space (IMS) into the matrix. Protons are taken up via the inlet half-channel and released through the outlet half-channel, following a Grotthuss mechanism. The chain is ATP synthase F(0) complex subunit C1, mitochondrial from Ovis aries (Sheep).